Reading from the N-terminus, the 235-residue chain is Aspartate/glutamate leucyltransferase (235 aa).

This sequence belongs to the R-transferase family. Bpt subfamily.

The protein localises to the cytoplasm. The catalysed reaction is N-terminal L-glutamyl-[protein] + L-leucyl-tRNA(Leu) = N-terminal L-leucyl-L-glutamyl-[protein] + tRNA(Leu) + H(+). It carries out the reaction N-terminal L-aspartyl-[protein] + L-leucyl-tRNA(Leu) = N-terminal L-leucyl-L-aspartyl-[protein] + tRNA(Leu) + H(+). Its function is as follows. Functions in the N-end rule pathway of protein degradation where it conjugates Leu from its aminoacyl-tRNA to the N-termini of proteins containing an N-terminal aspartate or glutamate. This is Aspartate/glutamate leucyltransferase from Stutzerimonas stutzeri (strain A1501) (Pseudomonas stutzeri).